We begin with the raw amino-acid sequence, 198 residues long: Protein hunchback (198 aa).

Disordered regions lie at residues 16-116 and 158-198; these read SHHH…NPMQ and LTPP…KYMA. A compositionally biased stretch (basic residues) spans 17–31; that stretch reads HHHHHHHAHHSHHQH. Composition is skewed to low complexity over residues 35 to 46 and 68 to 83; these read SNSNSNASSPHQ and QQQQ…QQQQ. Residues 95-105 show a composition bias toward polar residues; sequence PSPSNNDQNSP. Over residues 179–198 the composition is skewed to basic and acidic residues; sequence EPEKEHDLMSNSSEDMKYMA.

Belongs to the hunchback C2H2-type zinc-finger protein family.

It localises to the nucleus. Its function is as follows. Gap class segmentation protein that controls development of head structures. The chain is Protein hunchback (hb) from Drosophila cyrtoloma (Fruit fly).